The chain runs to 330 residues: Aspartate--ammonia ligase (330 aa).

It belongs to the class-II aminoacyl-tRNA synthetase family. AsnA subfamily.

The protein localises to the cytoplasm. It catalyses the reaction L-aspartate + NH4(+) + ATP = L-asparagine + AMP + diphosphate + H(+). It participates in amino-acid biosynthesis; L-asparagine biosynthesis; L-asparagine from L-aspartate (ammonia route): step 1/1. This Mannheimia succiniciproducens (strain KCTC 0769BP / MBEL55E) protein is Aspartate--ammonia ligase.